A 101-amino-acid chain; its full sequence is Protein RnfH (101 aa).

Belongs to the UPF0125 (RnfH) family.

The polypeptide is Protein RnfH (Coxiella burnetii (strain RSA 331 / Henzerling II)).